A 486-amino-acid polypeptide reads, in one-letter code: Transcription factor VOZ1 (486 aa).

The interval 208–405 (PPSAFLGPKC…VDGKKTSKGK (198 aa)) is VOZ. Residues Cys217, Cys222, Cys236, and His240 each coordinate Zn(2+). The segment at 217 to 240 (CALWDCPRPAQGFDWFQDYCSSFH) adopts a C3H1-type; atypical zinc-finger fold. The tract at residues 424–445 (EFPPENNTTNTTNNNKRCIKGR) is disordered. A compositionally biased stretch (low complexity) spans 429–438 (NNTTNTTNNN).

In terms of assembly, homodimer. Interacts with phytochrome B (phyB). As to expression, ubiquitous. Expressed in the vascular bundles of various tissues, specifically in the phloem.

It is found in the cytoplasm. The protein localises to the nucleus. Its function is as follows. Transcriptional activator acting positively in the phytochrome B signaling pathway. Functions redundantly with VOZ2 to promote flowering downstream of phytochrome B (phyB). Down-regulates 'FLOWERING LOCUS C' (FLC) and up-regulates 'FLOWERING LOCUS T' (FT). Binds to the 38-bp cis-acting region of the AVP1 gene. Interacts with phyB in the cytoplasm and is translocated to the nucleus at signal transmission, where it is subjected to degradation in a phytochrome-dependent manner. This Arabidopsis thaliana (Mouse-ear cress) protein is Transcription factor VOZ1 (VOZ1).